The primary structure comprises 467 residues: Probable lipase C1672.09 (467 aa).

At 1 to 17 (MIQLPFIQRLKWEEYMA) the chain is on the cytoplasmic side. Residues 18–38 (LFLGFFFVIFEKLLSCLAFMI) traverse the membrane as a helical; Signal-anchor for type II membrane protein segment. The Lumenal portion of the chain corresponds to 39 to 467 (HNTLGLFYRS…NHIAPRNKPI (429 aa)). Ser66 carries the phosphoserine modification. Residues 127-421 (PVVYCHHGLL…SYEHLDMIWA (295 aa)) enclose the AB hydrolase-1 domain. Ser222 serves as the catalytic Nucleophile. N-linked (GlcNAc...) asparagine glycans are attached at residues Asn311 and Asn316. Active-site charge relay system residues include Asp389 and His415. Residues 440 to 457 (HHPPEHEENDKENREIQK) show a composition bias toward basic and acidic residues. Positions 440 to 467 (HHPPEHEENDKENREIQKNHIAPRNKPI) are disordered.

The protein belongs to the AB hydrolase superfamily. Lipase family.

It localises to the cytoplasm. The protein resides in the membrane. Functionally, probable lipase. This Schizosaccharomyces pombe (strain 972 / ATCC 24843) (Fission yeast) protein is Probable lipase C1672.09.